The chain runs to 440 residues: MLDCYVVKEVSNDKLKWEYEFVIDKKYFLDQLDSKLSEIAKNVKVPGFRVGKASIDLVKKEYLNDVMTDVVRKTIESTSSDFVKSNKFGEIISSNIDIVSYPNYYSDNDSKEENLVYKLSFEVMPEAPLMDIDSIVLNGIEVDIQESDVSEFIENLKKQRPNFIVVNGAEYAVQEGDKVVIDYQNKVKGKILRGGSAKDFALVIGKGVALKEFENQLLGMRVGETKSFPLTFPDDYSVAYLAGKTTDMSVVVKSIYVVKDVQDNESVARSYGFKDVAEMENFVRKQIGQQFDQMVLTIMKKELFDYMDNTYSIDVPECVVKQEITKINKEILDSGEDIQIDVEKEAVRRVKLGMLLIRMSRHNNITIKNEDVLSFIKNNYTDYGVDINNVLKMLQSNKNFANYISGKVLEDKVINYIIKLVKKDRKVMTTKEINLMFENI.

In terms of domain architecture, PPIase FKBP-type spans 176 to 261; the sequence is GDKVVIDYQN…VKSIYVVKDV (86 aa).

The protein belongs to the FKBP-type PPIase family. Tig subfamily.

Its subcellular location is the cytoplasm. It carries out the reaction [protein]-peptidylproline (omega=180) = [protein]-peptidylproline (omega=0). Involved in protein export. Acts as a chaperone by maintaining the newly synthesized protein in an open conformation. Functions as a peptidyl-prolyl cis-trans isomerase. The protein is Trigger factor of Ehrlichia canis (strain Jake).